We begin with the raw amino-acid sequence, 224 residues long: Response regulator protein GraR (224 aa).

Residues 2 to 115 (QILLVEDDNT…VLIAKLQAIY (114 aa)) enclose the Response regulatory domain. D51 bears the 4-aspartylphosphate mark. Positions 126–224 (KRTLTWQDAV…KVGKGYMAHE (99 aa)) form a DNA-binding region, ompR/PhoB-type. Residues T128, T130, and T149 each carry the phosphothreonine modification.

As to quaternary structure, interacts with GraX. Post-translationally, phosphorylated by GraS. Phosphorylated by Stk1; phosphorylation increases the DNA-binding activity of GraR.

The protein localises to the cytoplasm. In terms of biological role, member of the two-component regulatory system GraR/GraS involved in resistance against cationic antimicrobial peptides (CAMPs). Upon phosphorylation by GraS, functions as a transcription regulator by direct binding to promoter regions of target genes such as adhesins, exoproteins, transporters, toxins, and proteins involved in cell wall synthesis. Down-regulates the expression of many genes involved in RNA and amino acid synthesis or glycolysis. This chain is Response regulator protein GraR (graR), found in Staphylococcus aureus (strain USA300).